Here is a 351-residue protein sequence, read N- to C-terminus: Photosystem II D2 protein (351 aa).

Residues 39–59 (CSYLALGGWLTGTTFVTSWYT) traverse the membrane as a helical segment. Histidine 116 provides a ligand contact to chlorophyll a. Residues 123-139 (GFCLRQFEIARLVGIRP) traverse the membrane as a helical segment. The pheophytin a site is built by glutamine 128 and asparagine 141. A helical transmembrane segment spans residues 151–164 (VFVSVFLMYPLGQA). Histidine 196 is a binding site for chlorophyll a. A helical transmembrane segment spans residues 206–226 (GALLCAIHGATVQNTLFEDGD). A plastoquinone is bound by residues histidine 213 and phenylalanine 260. Histidine 213 serves as a coordination point for Fe cation. Histidine 267 is a binding site for Fe cation. Residues 277 to 293 (GLWTSAFGIVGLALNLR) form a helical membrane-spanning segment.

The protein belongs to the reaction center PufL/M/PsbA/D family. PSII is composed of 1 copy each of membrane proteins PsbA, PsbB, PsbC, PsbD, PsbE, PsbF, PsbH, PsbI, PsbJ, PsbK, PsbL, PsbM, PsbT, PsbX, PsbY, PsbZ, Psb30/Ycf12, at least 3 peripheral proteins of the oxygen-evolving complex and a large number of cofactors. It forms dimeric complexes. Requires The D1/D2 heterodimer binds P680, chlorophylls that are the primary electron donor of PSII, and subsequent electron acceptors. It shares a non-heme iron and each subunit binds pheophytin, quinone, additional chlorophylls, carotenoids and lipids. There is also a Cl(-1) ion associated with D1 and D2, which is required for oxygen evolution. The PSII complex binds additional chlorophylls, carotenoids and specific lipids. as cofactor.

It localises to the plastid. Its subcellular location is the chloroplast thylakoid membrane. The enzyme catalyses 2 a plastoquinone + 4 hnu + 2 H2O = 2 a plastoquinol + O2. Its function is as follows. Photosystem II (PSII) is a light-driven water:plastoquinone oxidoreductase that uses light energy to abstract electrons from H(2)O, generating O(2) and a proton gradient subsequently used for ATP formation. It consists of a core antenna complex that captures photons, and an electron transfer chain that converts photonic excitation into a charge separation. The D1/D2 (PsbA/PsbD) reaction center heterodimer binds P680, the primary electron donor of PSII as well as several subsequent electron acceptors. D2 is needed for assembly of a stable PSII complex. This Gracilaria tenuistipitata var. liui (Red alga) protein is Photosystem II D2 protein.